The following is a 353-amino-acid chain: Protein RecA (353 aa).

65–72 (GPESSGKT) contacts ATP.

Belongs to the RecA family.

Its subcellular location is the cytoplasm. Its function is as follows. Can catalyze the hydrolysis of ATP in the presence of single-stranded DNA, the ATP-dependent uptake of single-stranded DNA by duplex DNA, and the ATP-dependent hybridization of homologous single-stranded DNAs. It interacts with LexA causing its activation and leading to its autocatalytic cleavage. The polypeptide is Protein RecA (Aeromonas salmonicida (strain A449)).